A 94-amino-acid chain; its full sequence is MFGHTSVSFLLLSIVALGMVATVICSCDSEFSSEFCEQPEERICSCSTHVCCHLSSSKRDQCMTWNRCLSAQTGNRRSTHMQKRFLRMPRDLAD.

The first 25 residues, 1–25 (MFGHTSVSFLLLSIVALGMVATVIC), serve as a signal peptide directing secretion. E30, E34, E37, E40, and E41 each carry 4-carboxyglutamate. A propeptide spanning residues 78 to 94 (STHMQKRFLRMPRDLAD) is cleaved from the precursor.

It belongs to the conotoxin I2 superfamily. Contains 4 disulfide bonds. As to expression, expressed by the venom duct.

The protein resides in the secreted. This Conus marmoreus (Marble cone) protein is Conotoxin Gla-MrII.